A 276-amino-acid chain; its full sequence is N-acyl homoserine lactonase AiiB (276 aa).

Zn(2+)-binding residues include histidine 111, histidine 113, histidine 116, histidine 191, aspartate 213, and histidine 259.

This sequence belongs to the metallo-beta-lactamase superfamily. Zn(2+) is required as a cofactor.

The catalysed reaction is an N-acyl-L-homoserine lactone + H2O = an N-acyl-L-homoserine + H(+). The protein is N-acyl homoserine lactonase AiiB of Rhizobium rhizogenes (strain K84 / ATCC BAA-868) (Agrobacterium radiobacter).